We begin with the raw amino-acid sequence, 278 residues long: 4-deoxy-L-threo-5-hexosulose-uronate ketol-isomerase (278 aa).

Residues histidine 196, histidine 198, glutamate 203, and histidine 245 each coordinate Zn(2+).

This sequence belongs to the KduI family. It depends on Zn(2+) as a cofactor.

The catalysed reaction is 5-dehydro-4-deoxy-D-glucuronate = 3-deoxy-D-glycero-2,5-hexodiulosonate. It participates in glycan metabolism; pectin degradation; 2-dehydro-3-deoxy-D-gluconate from pectin: step 4/5. Catalyzes the isomerization of 5-dehydro-4-deoxy-D-glucuronate to 3-deoxy-D-glycero-2,5-hexodiulosonate. In Shigella flexneri serotype 5b (strain 8401), this protein is 4-deoxy-L-threo-5-hexosulose-uronate ketol-isomerase.